Consider the following 61-residue polypeptide: Small ribosomal subunit protein uS14 (61 aa).

Zn(2+) is bound by residues cysteine 24, cysteine 27, cysteine 40, and cysteine 43.

The protein belongs to the universal ribosomal protein uS14 family. Zinc-binding uS14 subfamily. As to quaternary structure, part of the 30S ribosomal subunit. Contacts proteins S3 and S10. It depends on Zn(2+) as a cofactor.

In terms of biological role, binds 16S rRNA, required for the assembly of 30S particles and may also be responsible for determining the conformation of the 16S rRNA at the A site. The protein is Small ribosomal subunit protein uS14 of Nitratidesulfovibrio vulgaris (strain DSM 19637 / Miyazaki F) (Desulfovibrio vulgaris).